Reading from the N-terminus, the 446-residue chain is Exodeoxyribonuclease 7 large subunit (446 aa).

Belongs to the XseA family. In terms of assembly, heterooligomer composed of large and small subunits.

It localises to the cytoplasm. The catalysed reaction is Exonucleolytic cleavage in either 5'- to 3'- or 3'- to 5'-direction to yield nucleoside 5'-phosphates.. In terms of biological role, bidirectionally degrades single-stranded DNA into large acid-insoluble oligonucleotides, which are then degraded further into small acid-soluble oligonucleotides. The sequence is that of Exodeoxyribonuclease 7 large subunit from Streptococcus pneumoniae (strain Hungary19A-6).